Here is a 273-residue protein sequence, read N- to C-terminus: Exosome complex component MTR3 (273 aa).

The interval 1 to 36 (MPGDHRRIRGPEESQPPQLYAAEDDETPAARDPTRL) is disordered.

The protein belongs to the RNase PH family. As to quaternary structure, component of the RNA exosome core complex (Exo-9), composed of EXOSC1, EXOSC2, EXOSC3, EXOSC4, EXOSC5, EXOSC6, EXOSC7, EXOSC8 and EXOSC9; within the complex interacts with EXOSC1, EXOSC7 and EXOSC8. The catalytically inactive RNA exosome core complex (Exo-9) associates with the catalytic subunit EXOSC10/RRP6. Exo-9 may associate with DIS3 to form the nucleolar exosome complex, or DIS3L to form the cytoplasmic exosome complex. Exo-9 is formed by a hexameric base ring consisting of the heterodimers EXOSC4-EXOSC9, EXOSC5-EXOSC8 and EXOSC6-EXOSC7, and a cap ring consisting of EXOSC1, EXOSC2 and EXOSC3. The RNA exosome complex associates with cofactors EXOSC10/RRP6, C1D/RRP47, MPHOSPH6/MPP6 and MTREX/MTR4.

It localises to the cytoplasm. The protein resides in the nucleus. It is found in the nucleolus. Its function is as follows. Non-catalytic component of the RNA exosome complex which has 3'-&gt;5' exoribonuclease activity and participates in a multitude of cellular RNA processing and degradation events. In the nucleus, the RNA exosome complex is involved in proper maturation of stable RNA species such as rRNA, snRNA and snoRNA, in the elimination of RNA processing by-products and non-coding 'pervasive' transcripts, such as antisense RNA species and promoter-upstream transcripts (PROMPTs), and of mRNAs with processing defects, thereby limiting or excluding their export to the cytoplasm. The RNA exosome may be involved in Ig class switch recombination (CSR) and/or Ig variable region somatic hypermutation (SHM) by targeting AICDA deamination activity to transcribed dsDNA substrates. In the cytoplasm, the RNA exosome complex is involved in general mRNA turnover and specifically degrades inherently unstable mRNAs containing AU-rich elements (AREs) within their 3' untranslated regions, and in RNA surveillance pathways, preventing translation of aberrant mRNAs. It seems to be involved in degradation of histone mRNA. The catalytic inactive RNA exosome core complex of 9 subunits (Exo-9) is proposed to play a pivotal role in the binding and presentation of RNA for ribonucleolysis, and to serve as a scaffold for the association with catalytic subunits and accessory proteins or complexes. This Mus musculus (Mouse) protein is Exosome complex component MTR3 (Exosc6).